Reading from the N-terminus, the 250-residue chain is Putative HTH-type transcriptional regulatory protein PAE1627 (250 aa).

Residues 129–183 enclose the HTH cro/C1-type domain; it reads LRAKRQQAGLSLGTLATNLGVTRETVYRYERGEIEAPLKIAEKLINMFGEDITKK. Positions 140–159 form a DNA-binding region, H-T-H motif; it reads LGTLATNLGVTRETVYRYER.

The sequence is that of Putative HTH-type transcriptional regulatory protein PAE1627 from Pyrobaculum aerophilum (strain ATCC 51768 / DSM 7523 / JCM 9630 / CIP 104966 / NBRC 100827 / IM2).